A 147-amino-acid chain; its full sequence is 3-dehydroquinate dehydratase (147 aa).

Tyr-25 acts as the Proton acceptor in catalysis. The substrate site is built by Asn-76, His-82, and Asp-89. Catalysis depends on His-102, which acts as the Proton donor. Residues 103 to 104 (IS) and Arg-113 each bind substrate.

It belongs to the type-II 3-dehydroquinase family. Homododecamer.

It carries out the reaction 3-dehydroquinate = 3-dehydroshikimate + H2O. It functions in the pathway metabolic intermediate biosynthesis; chorismate biosynthesis; chorismate from D-erythrose 4-phosphate and phosphoenolpyruvate: step 3/7. Its function is as follows. Catalyzes a trans-dehydration via an enolate intermediate. The chain is 3-dehydroquinate dehydratase from Mycobacterium tuberculosis (strain ATCC 25177 / H37Ra).